The sequence spans 602 residues: Beta-(1--&gt;2)glucan export ATP-binding/permease protein NdvA (602 aa).

An ABC transmembrane type-1 domain is found at 21–311 (GWTLAVANLL…VVSFVNSLMM (291 aa)). 6 helical membrane-spanning segments follow: residues 22–42 (WTLA…PVLF), 68–88 (LLAA…TVAL), 146–166 (EHFA…YINW), 167–187 (RLAI…TLVV), 254–274 (VITR…GIAL), and 276–296 (QQGL…TLLI). Residues 345–579 (VEFLDVSFSY…RGRFAELARA (235 aa)) enclose the ABC transporter domain. An ATP-binding site is contributed by 378-385 (GATGAGKS).

Belongs to the ABC transporter superfamily. Beta-(1--&gt;2)glucan exporter (TC 3.A.1.108.1) family. As to quaternary structure, homodimer.

The protein resides in the cell inner membrane. The enzyme catalyses [(1-&gt;2)-beta-D-glucosyl](n)(in) + ATP + H2O = [(1-&gt;2)-beta-D-glucosyl](n)(out) + ADP + phosphate + H(+). Its function is as follows. Involved in beta-(1--&gt;2)glucan export. Transmembrane domains (TMD) form a pore in the inner membrane and the ATP-binding domain (NBD) is responsible for energy generation. The protein is Beta-(1--&gt;2)glucan export ATP-binding/permease protein NdvA of Rhodopseudomonas palustris (strain BisB5).